The chain runs to 479 residues: FAD-dependent monooxygenase sdcF (479 aa).

In terms of domain architecture, FAD-binding PCMH-type spans 40-213 (AQLPPSCFVL…TLFDMEAFST (174 aa)). His79 carries the pros-8alpha-FAD histidine modification.

It belongs to the oxygen-dependent FAD-linked oxidoreductase family. FAD serves as cofactor.

It functions in the pathway secondary metabolite biosynthesis. FAD-dependent monooxygenase; part of the gene cluster that mediates the biosynthesis of the polyenes aspernidgulenes. The carbon backbone of aspernidgulenes is synthesized by the HR-PKS sdgA, which accepts acetyl-CoA as the starter unit and performs malonyl-CoA extensions as well as regioselective methylation and reduction. The resulting nonaketide offloads the HR-PKS by intramolecular lactonization to yield the 5,6-dihydro-alpha-pyrone-containing hexaenoic acids preaspernidgulene A1 and A2. The FAD-dependent monooxygenase sdgC then installs the first epoxide on the penultimate double bond. Subsequently, the FAD-dependent monooxygenase sdgF presumably generates a ketone intermediate through Meinwald rearrangement involving a hydride shift. Next, sdgC introduces another epoxide on the last olefin of the ketone intermediate after E/Z isomerization. The epoxide hydrolase sdgD then catalyzes stereospecific cyclization of the 5,6-dihydro-alpha-pyrone and opening of the epoxide ring to form an oxygenated trimethylcyclopentanone and an oxabicyclo[2.2.1]heptane unit. Finally, the bicyclic unit undergoes hydrolytic cleavage, either spontaneously or catalyzed by sdgD, to assemble the dimethyl-gamma-lactone moiety in aspernidgulene A1. In Emericella nidulans (strain FGSC A4 / ATCC 38163 / CBS 112.46 / NRRL 194 / M139) (Aspergillus nidulans), this protein is FAD-dependent monooxygenase sdcF.